Reading from the N-terminus, the 143-residue chain is D-aminoacyl-tRNA deacylase (143 aa).

The Gly-cisPro motif, important for rejection of L-amino acids motif lies at 135–136 (GP).

This sequence belongs to the DTD family. As to quaternary structure, homodimer.

The protein localises to the cytoplasm. The catalysed reaction is glycyl-tRNA(Ala) + H2O = tRNA(Ala) + glycine + H(+). The enzyme catalyses a D-aminoacyl-tRNA + H2O = a tRNA + a D-alpha-amino acid + H(+). Functionally, an aminoacyl-tRNA editing enzyme that deacylates mischarged D-aminoacyl-tRNAs. Also deacylates mischarged glycyl-tRNA(Ala), protecting cells against glycine mischarging by AlaRS. Acts via tRNA-based rather than protein-based catalysis; rejects L-amino acids rather than detecting D-amino acids in the active site. By recycling D-aminoacyl-tRNA to D-amino acids and free tRNA molecules, this enzyme counteracts the toxicity associated with the formation of D-aminoacyl-tRNA entities in vivo and helps enforce protein L-homochirality. The protein is D-aminoacyl-tRNA deacylase of Mycolicibacterium gilvum (strain PYR-GCK) (Mycobacterium gilvum (strain PYR-GCK)).